A 452-amino-acid polypeptide reads, in one-letter code: Cobyrinate a,c-diamide synthase (452 aa).

The region spanning 246-439 (TLAYALDDAF…LHVHFYQDEQ (194 aa)) is the GATase cobBQ-type domain. Residue Cys-328 is the Nucleophile of the active site.

The protein belongs to the CobB/CbiA family. Requires Mg(2+) as cofactor.

It catalyses the reaction cob(II)yrinate + 2 L-glutamine + 2 ATP + 2 H2O = cob(II)yrinate a,c diamide + 2 L-glutamate + 2 ADP + 2 phosphate + 2 H(+). The protein operates within cofactor biosynthesis; adenosylcobalamin biosynthesis; cob(II)yrinate a,c-diamide from sirohydrochlorin (anaerobic route): step 10/10. In terms of biological role, catalyzes the ATP-dependent amidation of the two carboxylate groups at positions a and c of cobyrinate, using either L-glutamine or ammonia as the nitrogen source. The chain is Cobyrinate a,c-diamide synthase from Streptococcus sanguinis (strain SK36).